The following is a 499-amino-acid chain: GTPase Der (499 aa).

EngA-type G domains are found at residues 3-166 (PVVA…MDEV) and 211-384 (IKLA…DCST). GTP-binding positions include 9–16 (GRPNVGKS), 56–60 (DTGGI), 118–121 (NKTD), 217–224 (GRPNVGKS), 264–268 (DTAGV), and 329–332 (NKWD). In terms of domain architecture, KH-like spans 385-469 (RRVNTSMLTR…PIRIQFKEGD (85 aa)).

Belongs to the TRAFAC class TrmE-Era-EngA-EngB-Septin-like GTPase superfamily. EngA (Der) GTPase family. As to quaternary structure, associates with the 50S ribosomal subunit.

GTPase that plays an essential role in the late steps of ribosome biogenesis. This is GTPase Der from Erwinia tasmaniensis (strain DSM 17950 / CFBP 7177 / CIP 109463 / NCPPB 4357 / Et1/99).